Consider the following 210-residue polypeptide: ATP-dependent Clp protease proteolytic subunit (210 aa).

The Nucleophile role is filled by serine 107. Histidine 132 is an active-site residue.

The protein belongs to the peptidase S14 family. As to quaternary structure, fourteen ClpP subunits assemble into 2 heptameric rings which stack back to back to give a disk-like structure with a central cavity, resembling the structure of eukaryotic proteasomes.

It localises to the cytoplasm. The enzyme catalyses Hydrolysis of proteins to small peptides in the presence of ATP and magnesium. alpha-casein is the usual test substrate. In the absence of ATP, only oligopeptides shorter than five residues are hydrolyzed (such as succinyl-Leu-Tyr-|-NHMec, and Leu-Tyr-Leu-|-Tyr-Trp, in which cleavage of the -Tyr-|-Leu- and -Tyr-|-Trp bonds also occurs).. Its function is as follows. Cleaves peptides in various proteins in a process that requires ATP hydrolysis. Has a chymotrypsin-like activity. Plays a major role in the degradation of misfolded proteins. The protein is ATP-dependent Clp protease proteolytic subunit of Zymomonas mobilis subsp. mobilis (strain ATCC 31821 / ZM4 / CP4).